A 727-amino-acid polypeptide reads, in one-letter code: Capsid protein VP1 (727 aa).

A compositionally biased stretch (basic residues) spans 1–10 (MAPPAKRARR). Disordered stretches follow at residues 1 to 38 (MAPP…SDAA) and 95 to 184 (VLTD…VGIS). The short motif at 4-13 (PAKRARRGLV) is the Nuclear localization signal element. The phospholipase A2-like stretch occupies residues 19-64 (YLGPGNSLDQGEPTNPSDAAAKEHDEAYAAYLRSGKNPYLYFSPAD). Polar residues predominate over residues 25 to 35 (SLDQGEPTNPS). A compositionally biased stretch (gly residues) spans 166-183 (SGNGSGGGGGGGSGGVGI). Asn323 is a binding site for Mg(2+). A disordered region spans residues 507–536 (AQTDENQAADGDPRYAFGRQHGQKTTTTGE). Residues Cys633 and Cys637 are joined by a disulfide bond.

This sequence belongs to the parvoviridae capsid protein family. As to quaternary structure, interacts with host TFRC.

It is found in the virion. Its subcellular location is the host nucleus. Functionally, capsid protein self-assembles to form an icosahedral capsid with a T=1 symmetry, about 22 nm in diameter, and consisting of 60 copies of two size variants of the capsid proteins, VP1 and VP2, which differ by the presence of an N-terminal extension in the minor protein VP1. The capsid encapsulates the genomic ssDNA. Capsid proteins are responsible for the attachment to host cell receptor TFRC. This attachment induces virion internalization predominantly through clathrin-dependent endocytosis. Binding to the host receptors also induces capsid rearrangements leading to surface exposure of VP1 N-terminus. This chain is Capsid protein VP1, found in Feline panleukopenia virus (FPV).